A 174-amino-acid chain; its full sequence is NADH-ubiquinone oxidoreductase chain 6 (174 aa).

6 helical membrane passes run 1 to 21 (MTYA…GFSS), 24 to 44 (SPIY…AIIL), 47 to 67 (GGGY…MVVF), 86 to 106 (VEVL…VLWV), 111 to 131 (GMVV…EGEG), and 151 to 171 (WLVV…IEIA).

It belongs to the complex I subunit 6 family. As to quaternary structure, core subunit of respiratory chain NADH dehydrogenase (Complex I) which is composed of 45 different subunits.

Its subcellular location is the mitochondrion inner membrane. It carries out the reaction a ubiquinone + NADH + 5 H(+)(in) = a ubiquinol + NAD(+) + 4 H(+)(out). Functionally, core subunit of the mitochondrial membrane respiratory chain NADH dehydrogenase (Complex I) which catalyzes electron transfer from NADH through the respiratory chain, using ubiquinone as an electron acceptor. Essential for the catalytic activity and assembly of complex I. This Pan troglodytes (Chimpanzee) protein is NADH-ubiquinone oxidoreductase chain 6 (MT-ND6).